A 593-amino-acid chain; its full sequence is NADH-quinone oxidoreductase subunit C/D (593 aa).

The tract at residues 1–184 (MTADNALYIP…DPYSLTLAKQ (184 aa)) is NADH dehydrogenase I subunit C. Residues 208–593 (DYMFLNLGPN…IDFVMADVDR (386 aa)) form an NADH dehydrogenase I subunit D region.

The protein in the N-terminal section; belongs to the complex I 30 kDa subunit family. This sequence in the C-terminal section; belongs to the complex I 49 kDa subunit family. As to quaternary structure, NDH-1 is composed of 13 different subunits. Subunits NuoB, CD, E, F, and G constitute the peripheral sector of the complex.

The protein resides in the cell inner membrane. The catalysed reaction is a quinone + NADH + 5 H(+)(in) = a quinol + NAD(+) + 4 H(+)(out). Functionally, NDH-1 shuttles electrons from NADH, via FMN and iron-sulfur (Fe-S) centers, to quinones in the respiratory chain. The immediate electron acceptor for the enzyme in this species is believed to be ubiquinone. Couples the redox reaction to proton translocation (for every two electrons transferred, four hydrogen ions are translocated across the cytoplasmic membrane), and thus conserves the redox energy in a proton gradient. In Pseudomonas syringae pv. tomato (strain ATCC BAA-871 / DC3000), this protein is NADH-quinone oxidoreductase subunit C/D.